The sequence spans 252 residues: Urease accessory protein UreD (252 aa).

The protein belongs to the UreD family. UreD, UreF and UreG form a complex that acts as a GTP-hydrolysis-dependent molecular chaperone, activating the urease apoprotein by helping to assemble the nickel containing metallocenter of UreC. The UreE protein probably delivers the nickel.

Its subcellular location is the cytoplasm. In terms of biological role, required for maturation of urease via the functional incorporation of the urease nickel metallocenter. This chain is Urease accessory protein UreD, found in Streptomyces avermitilis (strain ATCC 31267 / DSM 46492 / JCM 5070 / NBRC 14893 / NCIMB 12804 / NRRL 8165 / MA-4680).